The sequence spans 526 residues: Protein spinster homolog 1 (526 aa).

Residues 1 to 43 (MTSRSSQGDAAPFLTQADNTEEEGAPDPGGHSSDEEEEEGKDH) are disordered. The next 12 membrane-spanning stretches (helical) occupy residues 48–68 (HLLT…LFYI), 98–118 (GLVQ…FGYL), 126–146 (LIMC…SFVS), 159–179 (LVGV…ADLF), 187–207 (MLSF…IAGS), 218–238 (WALR…IFVA), 272–292 (FILS…LALW), 321–341 (MIFG…GVEI), 355–375 (LVCA…LAFA), 385–405 (FIFI…DILL), 419–439 (LQIV…IGVI), and 463–483 (MICA…ALFI).

This sequence belongs to the major facilitator superfamily. Spinster (TC 2.A.1.49) family.

The protein localises to the lysosome membrane. It carries out the reaction a 1-acyl-sn-glycero-3-phosphocholine(out) + H(+)(out) = a 1-acyl-sn-glycero-3-phosphocholine(in) + H(+)(in). The enzyme catalyses a 1-acyl-sn-glycero-3-phosphoethanolamine(out) + H(+)(out) = a 1-acyl-sn-glycero-3-phosphoethanolamine(in) + H(+)(in). The catalysed reaction is a 1-O-(1Z-alkenyl)-sn-glycero-3-phosphocholine(out) + H(+)(out) = a 1-O-(1Z-alkenyl)-sn-glycero-3-phosphocholine(in) + H(+)(in). It catalyses the reaction a 1-O-(1Z-alkenyl)-sn-glycero-3-phosphoethanolamine(out) + H(+)(out) = a 1-O-(1Z-alkenyl)-sn-glycero-3-phosphoethanolamine(in) + H(+)(in). Mediates the rate-limiting, proton-dependent, lysosomal efflux of lysophospholipids. Selective for zwitterionic headgroups such as lysophosphatidylcholine (LPC) and lysophosphatidylethanolamine (LPE). Essential player in lysosomal homeostasis. This is Protein spinster homolog 1 (spns1) from Xenopus tropicalis (Western clawed frog).